The following is a 549-amino-acid chain: MAQLSGQPVVILPEGTQRYVGRDAQRLNILAARIIAETVRTTLGPKGMDKMLVDSLGDIVVTNDGATILDKIDLQHPAAKMMVEVAKTQDKEAGDGTTTAVVIAGELLRKAEELLDQNIHPSIIIKGYALAAEKAQEILEEIAIKVNPDDEETLLRIAMTSITGKNAESHKELLAKLAVDAVKQVAEKKDGKYVVDLDNIKFEKKAGEGVEESELVRGVVIDKEVVHPRMPKRVEGAKIALINEALEVKKTETDAKINITSPDQLMSFLEQEEKMLKDMVDHIAQTGANVVFVQKGIDDLAQHYLAKYGIMAVRRVKKSDMEKLAKATGAKIVTNVKDLTPEDLGYAEIVEERKLAGENMIFVEGCKNPKAVTILIRGGTEHVIDEVERALEDAVKVVKDVMEDGAVLPAGGAPEIELAISVDEYAKQVGGKEALAIENFADALKIIPKTLAENAGLDTVEILVKVISEHKNKGLGIGIDVFAGEPADMLERGIIAPLRVTKQAIKSARAAIMILRIDDVIAAKVSKPEGRQGAECPPNGCMGGMDMRM.

A disordered region spans residues 529–549; the sequence is EGRQGAECPPNGCMGGMDMRM.

Belongs to the TCP-1 chaperonin family. As to quaternary structure, forms a Heterooligomeric complex of two stacked eight-membered rings.

In terms of biological role, molecular chaperone; binds unfolded polypeptides in vitro, and has a weak ATPase activity. In Thermococcus sp. (strain KS-8), this protein is Thermosome subunit alpha (thsA).